Consider the following 205-residue polypeptide: Holliday junction branch migration complex subunit RuvA (205 aa).

A domain I region spans residues Met-1 to Leu-64. Residues Thr-65–Pro-143 are domain II. The tract at residues Asp-144–Ala-153 is flexible linker. The tract at residues Ala-153–Gly-205 is domain III.

It belongs to the RuvA family. In terms of assembly, homotetramer. Forms an RuvA(8)-RuvB(12)-Holliday junction (HJ) complex. HJ DNA is sandwiched between 2 RuvA tetramers; dsDNA enters through RuvA and exits via RuvB. An RuvB hexamer assembles on each DNA strand where it exits the tetramer. Each RuvB hexamer is contacted by two RuvA subunits (via domain III) on 2 adjacent RuvB subunits; this complex drives branch migration. In the full resolvosome a probable DNA-RuvA(4)-RuvB(12)-RuvC(2) complex forms which resolves the HJ.

It is found in the cytoplasm. The RuvA-RuvB-RuvC complex processes Holliday junction (HJ) DNA during genetic recombination and DNA repair, while the RuvA-RuvB complex plays an important role in the rescue of blocked DNA replication forks via replication fork reversal (RFR). RuvA specifically binds to HJ cruciform DNA, conferring on it an open structure. The RuvB hexamer acts as an ATP-dependent pump, pulling dsDNA into and through the RuvAB complex. HJ branch migration allows RuvC to scan DNA until it finds its consensus sequence, where it cleaves and resolves the cruciform DNA. In Symbiobacterium thermophilum (strain DSM 24528 / JCM 14929 / IAM 14863 / T), this protein is Holliday junction branch migration complex subunit RuvA.